The following is a 614-amino-acid chain: MTASATRQRPEADLGTAEWLVCDGCRRMIYGRRFARGGHVCPECGWHARLTATQRIALLLDEGSVEVVDTPVTAADPLQFVDTRPYADRLRSARTSTGLTEAVVVARGRIEGCPVVTAVMDFRFLGGSLGAAVGEAITGACEIALRERTPLLLVTASGGARMQEGALSLMQMAKTAQAIGQLDEAGILTVSLITDPTFGGVAASFATLTDVIVAEPGARLGFAGARVIEQTIRQTLPPGFQTAEFLLEHGVVDLISPRGQLRPTLARLLGVATRRPGTAPVTPGDGHSAGDGRGAGDSRGASHGGDGVVRDPARLADRHPWEAVRLARRLGRPSTLDYIGALVEDWTELHGDRAATDCPAMVAGLGRLDGTPVVVIGTQKGHTATELAARSYGMPSPGGYRKAARVMRLAAKLGLPVITLIDTAGAHPGLEAEQNGQAVAIAENLRLMAGLPVPVVAVVTGEGGSGGALALAVANRVLMCANAIYSVISPEGCAAILWKDPAAGPDAAAALRVDARALLAAGIVDGVVPEPDGGADVDPLAATDALRAALTGALAELAPLDPPTLVTARRARFRRFGTPAPAGGAAPAPVVPAARPPLGAGRTHADLDDARRAS.

Residues 1-250 are acetyl-coenzyme A carboxylase carboxyl transferase subunit beta; sequence MTASATRQRP…QTAEFLLEHG (250 aa). The CoA carboxyltransferase N-terminal domain maps to 18 to 287; the sequence is EWLVCDGCRR…TAPVTPGDGH (270 aa). The tract at residues 18–556 is carboxyltransferase; the sequence is EWLVCDGCRR…RAALTGALAE (539 aa). Positions 22, 25, 41, and 44 each coordinate Zn(2+). The segment at 22–44 adopts a C4-type zinc-finger fold; the sequence is CDGCRRMIYGRRFARGGHVCPEC. The tract at residues 251-614 is acetyl-coenzyme A carboxylase carboxyl transferase subunit alpha; it reads VVDLISPRGQ…ADLDDARRAS (364 aa). Disordered regions lie at residues 272 to 314 and 577 to 614; these read ATRR…DPAR and GTPA…RRAS. Positions 297–307 are enriched in gly residues; it reads DSRGASHGGDG. The 246-residue stretch at 311–556 folds into the CoA carboxyltransferase C-terminal domain; it reads DPARLADRHP…RAALTGALAE (246 aa). A compositionally biased stretch (low complexity) spans 579–602; sequence PAPAGGAAPAPVVPAARPPLGAGR. The span at 603–614 shows a compositional bias: basic and acidic residues; that stretch reads THADLDDARRAS.

The protein in the N-terminal section; belongs to the AccD/PCCB family. It in the C-terminal section; belongs to the AccA family. Acetyl-CoA carboxylase is a heterotetramer composed of biotin carboxyl carrier protein (AccB), biotin carboxylase (AccC) and two subunits of ACCase subunit beta/alpha. It depends on Zn(2+) as a cofactor.

The protein resides in the cytoplasm. The catalysed reaction is N(6)-carboxybiotinyl-L-lysyl-[protein] + acetyl-CoA = N(6)-biotinyl-L-lysyl-[protein] + malonyl-CoA. It participates in lipid metabolism; malonyl-CoA biosynthesis; malonyl-CoA from acetyl-CoA: step 1/1. Functionally, component of the acetyl coenzyme A carboxylase (ACC) complex. Biotin carboxylase (BC) catalyzes the carboxylation of biotin on its carrier protein (BCCP) and then the CO(2) group is transferred by the transcarboxylase to acetyl-CoA to form malonyl-CoA. The polypeptide is Acetyl-coenzyme A carboxylase carboxyl transferase subunits beta/alpha (accD) (Parafrankia sp. (strain EAN1pec)).